A 316-amino-acid chain; its full sequence is Transaldolase B (316 aa).

K131 serves as the catalytic Schiff-base intermediate with substrate.

The protein belongs to the transaldolase family. Type 1 subfamily. As to quaternary structure, homodimer.

Its subcellular location is the cytoplasm. It catalyses the reaction D-sedoheptulose 7-phosphate + D-glyceraldehyde 3-phosphate = D-erythrose 4-phosphate + beta-D-fructose 6-phosphate. It participates in carbohydrate degradation; pentose phosphate pathway; D-glyceraldehyde 3-phosphate and beta-D-fructose 6-phosphate from D-ribose 5-phosphate and D-xylulose 5-phosphate (non-oxidative stage): step 2/3. In terms of biological role, transaldolase is important for the balance of metabolites in the pentose-phosphate pathway. In Pasteurella multocida (strain Pm70), this protein is Transaldolase B (talB).